Here is a 159-residue protein sequence, read N- to C-terminus: Phosphopantetheine adenylyltransferase (159 aa).

Thr10 serves as a coordination point for substrate. Residues 10–11 (TF) and His18 contribute to the ATP site. 3 residues coordinate substrate: Lys42, Met74, and Arg88. ATP contacts are provided by residues 89 to 91 (GLR), Glu99, and 124 to 130 (WSFISSS).

The protein belongs to the bacterial CoaD family. Homohexamer. Mg(2+) is required as a cofactor.

The protein resides in the cytoplasm. The enzyme catalyses (R)-4'-phosphopantetheine + ATP + H(+) = 3'-dephospho-CoA + diphosphate. It functions in the pathway cofactor biosynthesis; coenzyme A biosynthesis; CoA from (R)-pantothenate: step 4/5. In terms of biological role, reversibly transfers an adenylyl group from ATP to 4'-phosphopantetheine, yielding dephospho-CoA (dPCoA) and pyrophosphate. The protein is Phosphopantetheine adenylyltransferase of Escherichia coli (strain UTI89 / UPEC).